We begin with the raw amino-acid sequence, 215 residues long: Octanoyltransferase (215 aa).

Residues 31–206 (TSAEDEIWLV…QLVKHLDYAE (176 aa)) enclose the BPL/LPL catalytic domain. Substrate is bound by residues 70–77 (RGGQVTYH), 137–139 (SLG), and 150–152 (GLA). The active-site Acyl-thioester intermediate is the Cys168.

The protein belongs to the LipB family.

It is found in the cytoplasm. It carries out the reaction octanoyl-[ACP] + L-lysyl-[protein] = N(6)-octanoyl-L-lysyl-[protein] + holo-[ACP] + H(+). Its pathway is protein modification; protein lipoylation via endogenous pathway; protein N(6)-(lipoyl)lysine from octanoyl-[acyl-carrier-protein]: step 1/2. In terms of biological role, catalyzes the transfer of endogenously produced octanoic acid from octanoyl-acyl-carrier-protein onto the lipoyl domains of lipoate-dependent enzymes. Lipoyl-ACP can also act as a substrate although octanoyl-ACP is likely to be the physiological substrate. This Pseudomonas fluorescens (strain SBW25) protein is Octanoyltransferase.